The primary structure comprises 270 residues: Putative pyruvate, phosphate dikinase regulatory protein (270 aa).

ADP is bound at residue 148–155; it reads GISRTSKT.

The protein belongs to the pyruvate, phosphate/water dikinase regulatory protein family. PDRP subfamily.

It catalyses the reaction N(tele)-phospho-L-histidyl/L-threonyl-[pyruvate, phosphate dikinase] + ADP = N(tele)-phospho-L-histidyl/O-phospho-L-threonyl-[pyruvate, phosphate dikinase] + AMP + H(+). The enzyme catalyses N(tele)-phospho-L-histidyl/O-phospho-L-threonyl-[pyruvate, phosphate dikinase] + phosphate + H(+) = N(tele)-phospho-L-histidyl/L-threonyl-[pyruvate, phosphate dikinase] + diphosphate. In terms of biological role, bifunctional serine/threonine kinase and phosphorylase involved in the regulation of the pyruvate, phosphate dikinase (PPDK) by catalyzing its phosphorylation/dephosphorylation. The polypeptide is Putative pyruvate, phosphate dikinase regulatory protein (Bacillus mycoides (strain KBAB4) (Bacillus weihenstephanensis)).